A 236-amino-acid polypeptide reads, in one-letter code: Ubiquinone biosynthesis O-methyltransferase (236 aa).

Arginine 39, glycine 59, aspartate 80, and methionine 124 together coordinate S-adenosyl-L-methionine.

The protein belongs to the methyltransferase superfamily. UbiG/COQ3 family.

It catalyses the reaction a 3-demethylubiquinol + S-adenosyl-L-methionine = a ubiquinol + S-adenosyl-L-homocysteine + H(+). The catalysed reaction is a 3-(all-trans-polyprenyl)benzene-1,2-diol + S-adenosyl-L-methionine = a 2-methoxy-6-(all-trans-polyprenyl)phenol + S-adenosyl-L-homocysteine + H(+). It participates in cofactor biosynthesis; ubiquinone biosynthesis. Its function is as follows. O-methyltransferase that catalyzes the 2 O-methylation steps in the ubiquinone biosynthetic pathway. This chain is Ubiquinone biosynthesis O-methyltransferase, found in Shewanella halifaxensis (strain HAW-EB4).